The sequence spans 98 residues: Feather beta keratin (98 aa).

The residue at position 2 (S2) is an N-acetylserine.

Belongs to the avian keratin family. In terms of assembly, the avian keratins (F-ker, S-ker, C-ker and B-ker) are a complex mixture of very similar polypeptides.

The sequence is that of Feather beta keratin from Cathartes aura (Turkey vulture).